The sequence spans 333 residues: Complement C1q and tumor necrosis factor-related protein 9B (333 aa).

The signal sequence occupies residues 1–19; the sequence is MRIWWLLLAIEICTGNINS. Collagen-like domains lie at 24–82, 95–154, and 155–191; these read RQGH…DGKV, GSPG…PGPM, and GPIG…GEKG. The interval 24–189 is disordered; that stretch reads RQGHPGIPGN…IRGWKGDRGE (166 aa). A compositionally biased stretch (low complexity) spans 26–40; sequence GHPGIPGNPGHNGLP. Composition is skewed to basic and acidic residues over residues 42–55 and 69–88; these read RDGR…KGDA and TSGE…KGIK. Positions 197-333 constitute a C1q domain; that stretch reads LVLPKSAFTV…FTGFLLFSSQ (137 aa).

In terms of assembly, interacts with CTRP9A and ADIPOQ. Forms heterotrimers and heterooligomeric complexes with CTRP9A. In terms of tissue distribution, expressed at low levels. Not expressed in adipose tissues.

The protein resides in the secreted. Its function is as follows. Probable adipokine. Activates AMPK, AKT, and p44/42 MAPK signaling pathways. The polypeptide is Complement C1q and tumor necrosis factor-related protein 9B (C1QTNF9B) (Homo sapiens (Human)).